The sequence spans 74 residues: ATP synthase subunit c (74 aa).

2 helical membrane-spanning segments follow: residues 8–28 (FIGA…VGNI) and 52–72 (IGFA…LMVL).

The protein belongs to the ATPase C chain family. F-type ATPases have 2 components, F(1) - the catalytic core - and F(0) - the membrane proton channel. F(1) has five subunits: alpha(3), beta(3), gamma(1), delta(1), epsilon(1). F(0) has three main subunits: a(1), b(2) and c(10-14). The alpha and beta chains form an alternating ring which encloses part of the gamma chain. F(1) is attached to F(0) by a central stalk formed by the gamma and epsilon chains, while a peripheral stalk is formed by the delta and b chains.

It is found in the cell inner membrane. In terms of biological role, f(1)F(0) ATP synthase produces ATP from ADP in the presence of a proton or sodium gradient. F-type ATPases consist of two structural domains, F(1) containing the extramembraneous catalytic core and F(0) containing the membrane proton channel, linked together by a central stalk and a peripheral stalk. During catalysis, ATP synthesis in the catalytic domain of F(1) is coupled via a rotary mechanism of the central stalk subunits to proton translocation. Key component of the F(0) channel; it plays a direct role in translocation across the membrane. A homomeric c-ring of between 10-14 subunits forms the central stalk rotor element with the F(1) delta and epsilon subunits. This chain is ATP synthase subunit c, found in Paramagnetospirillum magneticum (strain ATCC 700264 / AMB-1) (Magnetospirillum magneticum).